We begin with the raw amino-acid sequence, 450 residues long: Tubulin beta-3 chain (450 aa).

Residues glutamine 11, glutamate 69, serine 138, glycine 142, threonine 143, glycine 144, asparagine 204, and asparagine 226 each contribute to the GTP site. Glutamate 69 is a binding site for Mg(2+). The interval serine 420–tyrosine 450 is disordered. Over residues threonine 429–tyrosine 450 the composition is skewed to acidic residues.

The protein belongs to the tubulin family. In terms of assembly, dimer of alpha and beta chains. A typical microtubule is a hollow water-filled tube with an outer diameter of 25 nm and an inner diameter of 15 nM. Alpha-beta heterodimers associate head-to-tail to form protofilaments running lengthwise along the microtubule wall with the beta-tubulin subunit facing the microtubule plus end conferring a structural polarity. Microtubules usually have 13 protofilaments but different protofilament numbers can be found in some organisms and specialized cells. Mg(2+) is required as a cofactor.

It is found in the cytoplasm. The protein localises to the cytoskeleton. Its function is as follows. Tubulin is the major constituent of microtubules, a cylinder consisting of laterally associated linear protofilaments composed of alpha- and beta-tubulin heterodimers. Microtubules grow by the addition of GTP-tubulin dimers to the microtubule end, where a stabilizing cap forms. Below the cap, tubulin dimers are in GDP-bound state, owing to GTPase activity of alpha-tubulin. The sequence is that of Tubulin beta-3 chain (TUBB3) from Arabidopsis thaliana (Mouse-ear cress).